A 274-amino-acid polypeptide reads, in one-letter code: Large ribosomal subunit protein uL2 (274 aa).

The segment at 222–257 (GVAMNPVDHPHGGGEGRTSGGRHPVSPWGVPTKGYK) is disordered.

The protein belongs to the universal ribosomal protein uL2 family. As to quaternary structure, part of the 50S ribosomal subunit. Forms a bridge to the 30S subunit in the 70S ribosome.

Functionally, one of the primary rRNA binding proteins. Required for association of the 30S and 50S subunits to form the 70S ribosome, for tRNA binding and peptide bond formation. It has been suggested to have peptidyltransferase activity; this is somewhat controversial. Makes several contacts with the 16S rRNA in the 70S ribosome. This chain is Large ribosomal subunit protein uL2, found in Nitrosococcus oceani (strain ATCC 19707 / BCRC 17464 / JCM 30415 / NCIMB 11848 / C-107).